Reading from the N-terminus, the 224-residue chain is Zinc finger C4H2 domain-containing protein (224 aa).

A coiled-coil region spans residues 12–97; sequence ENIKEIRNKT…NKLLESTRRL (86 aa). 2 disordered regions span residues 166 to 185 and 204 to 224; these read QAARKQDARQTATFRQQPPP and PLCKAKSRSRNPKKPKRKPDE. The C4H2-type zinc finger occupies 189–206; sequence CLSCHQQIHRNAPICPLC. The span at 208-224 shows a compositional bias: basic residues; the sequence is AKSRSRNPKKPKRKPDE.

Its subcellular location is the nucleus. The protein resides in the cytoplasm. It is found in the postsynaptic cell membrane. Plays a role in GABAergic and V2 interneurons differentiation. Involved in motoneuron development and in neuromuscular junction formation. This Danio rerio (Zebrafish) protein is Zinc finger C4H2 domain-containing protein (zc4h2).